Consider the following 491-residue polypeptide: NADH-quinone oxidoreductase subunit N 1 (491 aa).

14 consecutive transmembrane segments (helical) span residues 15–35, 41–61, 77–97, 105–125, 130–150, 165–185, 211–231, 247–269, 279–299, 307–327, 333–353, 378–398, 416–436, and 459–479; these read VLGMPAFLMIWAMLVLIVDMF, VLLTLSLIGLGVTAALGALDY, FGVLVNWILLAGTALTLLIAF, LSQGEFYPLVLFATSGMLFLV, LVTIFIGVETLSIALYVLTGF, LLLGGFAAGFLVYGIALIYGM, PILLAGVGFVLIALGFKVSMF, PVTAYMSVATKGAAFAAMLRFLN, WQLLFGLFAAATMAYGNIVAV, MLAYSSIAHAGYMLLGVLAAS, AFTVYLLAYTLTNLGAFAVLI, LALAMTVFMFSLAGVPPTAGF, LAIIGVVTSVISAFFYLRVIV, and LGVIVAVIGIIAVGILPNIFT.

The protein belongs to the complex I subunit 2 family. In terms of assembly, NDH-1 is composed of 14 different subunits. Subunits NuoA, H, J, K, L, M, N constitute the membrane sector of the complex.

Its subcellular location is the cell membrane. It catalyses the reaction a quinone + NADH + 5 H(+)(in) = a quinol + NAD(+) + 4 H(+)(out). Functionally, NDH-1 shuttles electrons from NADH, via FMN and iron-sulfur (Fe-S) centers, to quinones in the respiratory chain. The immediate electron acceptor for the enzyme in this species is believed to be ubiquinone. Couples the redox reaction to proton translocation (for every two electrons transferred, four hydrogen ions are translocated across the cytoplasmic membrane), and thus conserves the redox energy in a proton gradient. In Herpetosiphon aurantiacus (strain ATCC 23779 / DSM 785 / 114-95), this protein is NADH-quinone oxidoreductase subunit N 1.